The sequence spans 481 residues: Trichosetin biosynthesis cluster MFS transporter (481 aa).

Positions 1 to 13 are enriched in polar residues; that stretch reads MSTTPQMSQSGFQ. A disordered region spans residues 1 to 63; the sequence is MSTTPQMSQS…DGPDDPQHPL (63 aa). The segment covering 20–31 has biased composition (basic and acidic residues); it reads GAREDVGTEAQE. An N-linked (GlcNAc...) asparagine glycan is attached at N64. The chain crosses the membrane as a helical span at residues 72–92; sequence LHVGIVSLSTLAANLAATMFA. N103 carries an N-linked (GlcNAc...) asparagine glycan. The next 5 helical transmembrane spans lie at 111–131, 147–167, 169–189, 200–220, and 228–248; these read AMTVSLYVLGFALGPLLLAPL, VYMAFTIGCAFSTNVAMFLVF, IIAGCAASGPMSIGGGTVADL, ALFAVGPLLGPVIGPIIGGFV, and WTFRILLILSGILATVTFALM. N-linked (GlcNAc...) asparagine glycosylation is present at N252. The next 5 helical transmembrane spans lie at 302–322, 353–373, 380–400, 403–423, and 446–466; these read PIVLLVSLYTGILFGLIFLLF, LLLMKWLGPITPLGLFIYGWT, WIVPIIGTFIVGFGSLFVVIP, IYLVDAFGAEAAASAMAANLL, and GWGNSVLGFITLAFTPVPWIF.

The protein belongs to the major facilitator superfamily.

It localises to the cell membrane. Efflux pump required for efficient secretion of trichosetin or other secondary metabolies produced by the trichosetin gene cluster. Plays a crucial role in detoxification of the toxic trichosetin in Gibberella fujikuroi cells. This Gibberella fujikuroi (strain CBS 195.34 / IMI 58289 / NRRL A-6831) (Bakanae and foot rot disease fungus) protein is Trichosetin biosynthesis cluster MFS transporter.